Here is a 427-residue protein sequence, read N- to C-terminus: Phosphatidate cytidylyltransferase, mitochondrial (427 aa).

Residues 94–106 show a composition bias toward polar residues; the sequence is YNRNGDGSTSTEN. Residues 94–113 form a disordered region; sequence YNRNGDGSTSTENPSKKEEQ.

It belongs to the TAM41 family. It depends on Mg(2+) as a cofactor.

The protein localises to the mitochondrion inner membrane. The enzyme catalyses a 1,2-diacyl-sn-glycero-3-phosphate + CTP + H(+) = a CDP-1,2-diacyl-sn-glycerol + diphosphate. Its pathway is phospholipid metabolism; CDP-diacylglycerol biosynthesis; CDP-diacylglycerol from sn-glycerol 3-phosphate: step 3/3. Its function is as follows. Catalyzes the formation of CDP-diacylglycerol (CDP-DAG) from phosphatidic acid (PA) in the mitochondrial inner membrane. Required for the biosynthesis of the dimeric phospholipid cardiolipin, which stabilizes supercomplexes of the mitochondrial respiratory chain in the mitochondrial inner membrane. The sequence is that of Phosphatidate cytidylyltransferase, mitochondrial from Dictyostelium discoideum (Social amoeba).